The sequence spans 564 residues: Proline--tRNA ligase (564 aa).

The protein belongs to the class-II aminoacyl-tRNA synthetase family. ProS type 1 subfamily. In terms of assembly, homodimer.

It localises to the cytoplasm. The catalysed reaction is tRNA(Pro) + L-proline + ATP = L-prolyl-tRNA(Pro) + AMP + diphosphate. In terms of biological role, catalyzes the attachment of proline to tRNA(Pro) in a two-step reaction: proline is first activated by ATP to form Pro-AMP and then transferred to the acceptor end of tRNA(Pro). As ProRS can inadvertently accommodate and process non-cognate amino acids such as alanine and cysteine, to avoid such errors it has two additional distinct editing activities against alanine. One activity is designated as 'pretransfer' editing and involves the tRNA(Pro)-independent hydrolysis of activated Ala-AMP. The other activity is designated 'posttransfer' editing and involves deacylation of mischarged Ala-tRNA(Pro). The misacylated Cys-tRNA(Pro) is not edited by ProRS. This Bacillus subtilis (strain 168) protein is Proline--tRNA ligase.